A 135-amino-acid polypeptide reads, in one-letter code: DNA-directed RNA polymerase subunit omega (135 aa).

This sequence belongs to the RNA polymerase subunit omega family. In terms of assembly, the RNAP catalytic core consists of 2 alpha, 1 beta, 1 beta' and 1 omega subunit. When a sigma factor is associated with the core the holoenzyme is formed, which can initiate transcription.

It catalyses the reaction RNA(n) + a ribonucleoside 5'-triphosphate = RNA(n+1) + diphosphate. Functionally, promotes RNA polymerase assembly. Latches the N- and C-terminal regions of the beta' subunit thereby facilitating its interaction with the beta and alpha subunits. The polypeptide is DNA-directed RNA polymerase subunit omega (Rhizobium meliloti (strain 1021) (Ensifer meliloti)).